The following is a 171-amino-acid chain: Iron-sulfur cluster assembly protein 1 (171 aa).

Residues 1-55 constitute a mitochondrion transit peptide; sequence MLRAGGRRLLAPGLRRVLGGGAAAPVAVGGAKAYHERVVDHYENPRNVGSFENDD.

The protein belongs to the NifU family. Component of the core Fe-S cluster (ISC) assembly machinery. [2Fe-2S] cluster serves as cofactor.

The protein resides in the mitochondrion matrix. Its pathway is cofactor biosynthesis; iron-sulfur cluster biosynthesis. In terms of biological role, scaffold protein for the de novo synthesis of iron-sulfur (Fe-S) clusters within mitochondria, which is required for maturation of both mitochondrial and cytoplasmic [2Fe-2S] and [4Fe-4S] proteins. First, a [2Fe-2S] cluster is transiently assembled on the scaffold protein ISCU (ISU1, ISU2 or ISU3). In a second step, the cluster is released from ISCU, transferred to a glutaredoxin, followed by the formation of mitochondrial [2Fe-2S] proteins, the synthesis of [4Fe-4S] clusters and their target-specific insertion into the recipient apoproteins. Cluster assembly on ISCU depends on the function of the cysteine desulfurase complex NFS1-ISD11, which serves as the sulfur donor for cluster synthesis, the iron-binding protein frataxin as the putative iron donor, and the electron transfer chain comprised of ferredoxin reductase and ferredoxin, which receive their electrons from NADH. The polypeptide is Iron-sulfur cluster assembly protein 1 (Oryza sativa subsp. japonica (Rice)).